A 517-amino-acid polypeptide reads, in one-letter code: Gamma-1-syntrophin (517 aa).

The 84-residue stretch at 57 to 140 (TVTIRRQTVG…EVTLTVSFLK (84 aa)) folds into the PDZ domain. The PH domain maps to 283–390 (QIVYMGWCEA…WERAFQTATF (108 aa)).

Belongs to the syntrophin family. As to quaternary structure, interacts with the dystrophin protein DMD and related proteins DTNA and DTNB. Interacts with DGKZ.

It is found in the cytoplasm. The protein resides in the cytoskeleton. It localises to the nucleus. In terms of biological role, adapter protein that binds to and probably organizes the subcellular localization of a variety of proteins. May link various receptors to the actin cytoskeleton and the dystrophin glycoprotein complex. May participate in regulating the subcellular location of diacylglycerol kinase-zeta to ensure that diacylglycerol is rapidly inactivated following receptor activation. The polypeptide is Gamma-1-syntrophin (Sntg1) (Mus musculus (Mouse)).